The following is a 583-amino-acid chain: 2-succinyl-5-enolpyruvyl-6-hydroxy-3-cyclohexene-1-carboxylate synthase (583 aa).

Belongs to the TPP enzyme family. MenD subfamily. In terms of assembly, homodimer. Requires Mg(2+) as cofactor. Mn(2+) is required as a cofactor. Thiamine diphosphate serves as cofactor.

It catalyses the reaction isochorismate + 2-oxoglutarate + H(+) = 5-enolpyruvoyl-6-hydroxy-2-succinyl-cyclohex-3-ene-1-carboxylate + CO2. Its pathway is quinol/quinone metabolism; 1,4-dihydroxy-2-naphthoate biosynthesis; 1,4-dihydroxy-2-naphthoate from chorismate: step 2/7. The protein operates within quinol/quinone metabolism; menaquinone biosynthesis. Catalyzes the thiamine diphosphate-dependent decarboxylation of 2-oxoglutarate and the subsequent addition of the resulting succinic semialdehyde-thiamine pyrophosphate anion to isochorismate to yield 2-succinyl-5-enolpyruvyl-6-hydroxy-3-cyclohexene-1-carboxylate (SEPHCHC). The protein is 2-succinyl-5-enolpyruvyl-6-hydroxy-3-cyclohexene-1-carboxylate synthase of Chlorobium phaeovibrioides (strain DSM 265 / 1930) (Prosthecochloris vibrioformis (strain DSM 265)).